Consider the following 737-residue polypeptide: Protein penguin (737 aa).

A disordered region spans residues 1–128 (MVSSEPKGPA…EKKDLKLKRK (128 aa)). 2 stretches are compositionally biased toward basic and acidic residues: residues 76–89 (KKFD…DKRL) and 107–122 (EGEK…EKKD). Residues 139 to 490 (EANQIHEKLR…EILEQIEAPI (352 aa)) enclose the PUM-HD domain. Pumilio repeat units follow at residues 167–202 (NVGD…EISE), 203–238 (KLLP…KLVD), 239–274 (SLYG…YMRQ), 388–425 (NIKE…AIYD), and 426–462 (HLHG…EFIR). The segment at 577–638 (VESSSDDEDE…EEEPAAPLVS (62 aa)) is disordered. Over residues 580–600 (SSDDEDEDEDEDEESDDEGDE) the composition is skewed to acidic residues. The span at 601 to 615 (KEQKEAAADDAEPKV) shows a compositional bias: basic and acidic residues. Over residues 616-626 (KKAKKEPKKPK) the composition is skewed to basic residues.

This Drosophila melanogaster (Fruit fly) protein is Protein penguin.